The chain runs to 103 residues: Small ribosomal subunit protein uS10 (103 aa).

This sequence belongs to the universal ribosomal protein uS10 family. Part of the 30S ribosomal subunit.

Involved in the binding of tRNA to the ribosomes. The polypeptide is Small ribosomal subunit protein uS10 (Novosphingobium aromaticivorans (strain ATCC 700278 / DSM 12444 / CCUG 56034 / CIP 105152 / NBRC 16084 / F199)).